The following is a 275-amino-acid chain: Adenylate kinase (275 aa).

54-59 (GAGKGT) provides a ligand contact to ATP. Residues 74–103 (ATGDMLRSQVAKKTPLGREAKKIMDQGGLV) are NMP. Residues threonine 75, arginine 80, 101-103 (GLV), 130-133 (GFPR), and glutamine 137 each bind AMP. Positions 171-208 (GRLVHPASGRSYHRVFNPPKAEMKDDITGEPLVSRSDD) are LID. Residues arginine 172 and 181–182 (SY) each bind ATP. Arginine 205 and arginine 216 together coordinate AMP. Residue glutamine 244 coordinates ATP.

This sequence belongs to the adenylate kinase family. AK2 subfamily. Monomer.

The protein resides in the cytoplasm. It is found in the cytosol. Its subcellular location is the mitochondrion intermembrane space. It catalyses the reaction AMP + ATP = 2 ADP. Functionally, catalyzes the reversible transfer of the terminal phosphate group between ATP and AMP. Plays an important role in cellular energy homeostasis and in adenine nucleotide metabolism. Adenylate kinase activity is critical for regulation of the phosphate utilization and the AMP de novo biosynthesis pathways. This Sclerotinia sclerotiorum (strain ATCC 18683 / 1980 / Ss-1) (White mold) protein is Adenylate kinase (adk1).